A 374-amino-acid polypeptide reads, in one-letter code: S-adenosylmethionine:tRNA ribosyltransferase-isomerase (374 aa).

Belongs to the QueA family. Monomer.

It is found in the cytoplasm. It carries out the reaction 7-aminomethyl-7-carbaguanosine(34) in tRNA + S-adenosyl-L-methionine = epoxyqueuosine(34) in tRNA + adenine + L-methionine + 2 H(+). Its pathway is tRNA modification; tRNA-queuosine biosynthesis. Transfers and isomerizes the ribose moiety from AdoMet to the 7-aminomethyl group of 7-deazaguanine (preQ1-tRNA) to give epoxyqueuosine (oQ-tRNA). This is S-adenosylmethionine:tRNA ribosyltransferase-isomerase from Prochlorococcus marinus (strain MIT 9301).